The primary structure comprises 213 residues: Thymidylate kinase (213 aa).

10-17 (GLEGAGKT) contributes to the ATP binding site.

This sequence belongs to the thymidylate kinase family.

The catalysed reaction is dTMP + ATP = dTDP + ADP. Its function is as follows. Phosphorylation of dTMP to form dTDP in both de novo and salvage pathways of dTTP synthesis. This is Thymidylate kinase from Enterobacter sp. (strain 638).